The following is a 382-amino-acid chain: Mannitol-1-phosphate 5-dehydrogenase (382 aa).

3–14 is an NAD(+) binding site; it reads ALHFGAGNIGRG.

This sequence belongs to the mannitol dehydrogenase family.

The enzyme catalyses D-mannitol 1-phosphate + NAD(+) = beta-D-fructose 6-phosphate + NADH + H(+). This Cronobacter sakazakii (strain ATCC BAA-894) (Enterobacter sakazakii) protein is Mannitol-1-phosphate 5-dehydrogenase.